Consider the following 290-residue polypeptide: Ribosomal RNA small subunit methyltransferase A (290 aa).

Positions 27, 29, 54, 75, 100, and 125 each coordinate S-adenosyl-L-methionine.

This sequence belongs to the class I-like SAM-binding methyltransferase superfamily. rRNA adenine N(6)-methyltransferase family. RsmA subfamily.

The protein localises to the cytoplasm. The catalysed reaction is adenosine(1518)/adenosine(1519) in 16S rRNA + 4 S-adenosyl-L-methionine = N(6)-dimethyladenosine(1518)/N(6)-dimethyladenosine(1519) in 16S rRNA + 4 S-adenosyl-L-homocysteine + 4 H(+). Functionally, specifically dimethylates two adjacent adenosines (A1518 and A1519) in the loop of a conserved hairpin near the 3'-end of 16S rRNA in the 30S particle. May play a critical role in biogenesis of 30S subunits. The sequence is that of Ribosomal RNA small subunit methyltransferase A from Streptococcus gordonii (strain Challis / ATCC 35105 / BCRC 15272 / CH1 / DL1 / V288).